Reading from the N-terminus, the 345-residue chain is Nuclear egress protein 1 (345 aa).

The CCCH-type zinc-finger motif lies at 115–247; sequence CISLSEMGYT…FVFKPGSPLH (133 aa).

It belongs to the herpesviridae NEC1 protein family. Forms a heterohexameric complex with NEC2. Interacts with capsid vertex specific component 2/CVC2; this interaction directs the capsid to the host inner nuclear membrane to initiate budding. In terms of processing, phosphorylated at serine residues in the N-terminus. This phosphorylation regulates the localization within the inner nuclear membrane.

The protein resides in the host nucleus inner membrane. In terms of biological role, plays an essential role in virion nuclear egress, the first step of virion release from infected cell. Within the host nucleus, NEC1 interacts with the newly formed capsid through the vertexes and directs it to the inner nuclear membrane by associating with NEC2. Induces the budding of the capsid at the inner nuclear membrane as well as its envelopment into the perinuclear space. There, the NEC1/NEC2 complex promotes the fusion of the enveloped capsid with the outer nuclear membrane and the subsequent release of the viral capsid into the cytoplasm where it will reach the secondary budding sites in the host Golgi or trans-Golgi network. The chain is Nuclear egress protein 1 from Psittacid herpesvirus 1 (isolate Amazon parrot/-/97-0001/1997) (PsHV-1).